A 361-amino-acid polypeptide reads, in one-letter code: Putative dual-specificity RNA methyltransferase RlmN (361 aa).

Glutamate 91 serves as the catalytic Proton acceptor. In terms of domain architecture, Radical SAM core spans 97-329 (QHYGLSVCVT…KKKGVNCVVR (233 aa)). 3 residues coordinate [4Fe-4S] cluster: cysteine 111, cysteine 115, and cysteine 118. S-adenosyl-L-methionine-binding positions include 163–164 (GE), serine 195, 218–220 (SLH), and threonine 296.

The protein belongs to the radical SAM superfamily. RlmN family. Requires [4Fe-4S] cluster as cofactor.

The protein localises to the cytoplasm. The enzyme catalyses adenosine(2503) in 23S rRNA + 2 reduced [2Fe-2S]-[ferredoxin] + 2 S-adenosyl-L-methionine = 2-methyladenosine(2503) in 23S rRNA + 5'-deoxyadenosine + L-methionine + 2 oxidized [2Fe-2S]-[ferredoxin] + S-adenosyl-L-homocysteine. It carries out the reaction adenosine(37) in tRNA + 2 reduced [2Fe-2S]-[ferredoxin] + 2 S-adenosyl-L-methionine = 2-methyladenosine(37) in tRNA + 5'-deoxyadenosine + L-methionine + 2 oxidized [2Fe-2S]-[ferredoxin] + S-adenosyl-L-homocysteine. Specifically methylates position 2 of adenine 2503 in 23S rRNA and position 2 of adenine 37 in tRNAs. The chain is Putative dual-specificity RNA methyltransferase RlmN from Streptococcus pneumoniae (strain CGSP14).